The chain runs to 139 residues: Large ribosomal subunit protein eL32 (139 aa).

This sequence belongs to the eukaryotic ribosomal protein eL32 family.

This is Large ribosomal subunit protein eL32 (RPL32) from Encephalitozoon cuniculi (strain GB-M1) (Microsporidian parasite).